Reading from the N-terminus, the 449-residue chain is tRNA-2-methylthio-N(6)-dimethylallyladenosine synthase (449 aa).

Residues 2-119 (KGLFIRTYGC…LPEMIARASR (118 aa)) form the MTTase N-terminal domain. Residues Cys-11, Cys-47, Cys-82, Cys-157, Cys-161, and Cys-164 each contribute to the [4Fe-4S] cluster site. The Radical SAM core domain maps to 143–378 (EADGPAAFVS…QALLREQQTE (236 aa)). Positions 381–443 (ASQIGKTLPV…LNSLTGELVR (63 aa)) constitute a TRAM domain.

Belongs to the methylthiotransferase family. MiaB subfamily. In terms of assembly, monomer. [4Fe-4S] cluster is required as a cofactor.

It localises to the cytoplasm. The catalysed reaction is N(6)-dimethylallyladenosine(37) in tRNA + (sulfur carrier)-SH + AH2 + 2 S-adenosyl-L-methionine = 2-methylsulfanyl-N(6)-dimethylallyladenosine(37) in tRNA + (sulfur carrier)-H + 5'-deoxyadenosine + L-methionine + A + S-adenosyl-L-homocysteine + 2 H(+). Catalyzes the methylthiolation of N6-(dimethylallyl)adenosine (i(6)A), leading to the formation of 2-methylthio-N6-(dimethylallyl)adenosine (ms(2)i(6)A) at position 37 in tRNAs that read codons beginning with uridine. The protein is tRNA-2-methylthio-N(6)-dimethylallyladenosine synthase of Hyphomonas neptunium (strain ATCC 15444).